Reading from the N-terminus, the 285-residue chain is MSEVGICKSLAGGGSLLAPKEGGGWHHPVEREEHPVGDANTVSEGHDKESAYQNPGQLVKAEAQEDDWKELGKKRHRRLRSKNKRRWKPYDKLTWEEKKELEERQSQRASRIRAEMIAKGQPVAPYNTTQFLMEDHDQEEPDLCPPPRKSSAALPLALNNSSYKGDSTDDDLEEEEDEAGSDGMGGYDGEDFLQKDFSETYERYHAESLQDMSKQDLIKEYLELEKCLSRMEEENNHLRVQSLASAPAADHRDTRIQELQVELEKLKEENQRLLQEGKQVAADSP.

Disordered stretches follow at residues 1 to 56 (MSEV…QNPG) and 132 to 196 (LMED…LQKD). Over residues 23–36 (GGWHHPVEREEHPV) the composition is skewed to basic and acidic residues. Acidic residues predominate over residues 168–180 (TDDDLEEEEDEAG). The stretch at 213–284 (SKQDLIKEYL…QEGKQVAADS (72 aa)) forms a coiled coil.

The protein belongs to the HEXIM family. In terms of assembly, homooligomer and heterooligomer. Core component of the 7SK RNP complex.

It localises to the nucleus. It is found in the cytoplasm. Functionally, transcriptional regulator which functions as a general RNA polymerase II transcription inhibitor. Core component of the 7SK RNP complex: in cooperation with 7SK snRNA sequesters P-TEFb in a large inactive 7SK snRNP complex preventing RNA polymerase II phosphorylation and subsequent transcriptional elongation. Plays a role in the regulation of DNA virus-mediated innate immune response by assembling into the HDP-RNP complex, a complex that serves as a platform for IRF3 phosphorylation and subsequent innate immune response activation through the cGAS-STING pathway. This is Protein HEXIM1 (hexim1) from Xenopus laevis (African clawed frog).